Consider the following 90-residue polypeptide: YcgL domain-containing protein Spro_2755 (90 aa).

Positions 1 to 85 (MLCVIYRSSK…PLENLLKQHL (85 aa)) constitute a YcgL domain.

The chain is YcgL domain-containing protein Spro_2755 from Serratia proteamaculans (strain 568).